The chain runs to 398 residues: Histone-lysine N-methyltransferase ASHR2 (398 aa).

The SET domain occupies 11–270 (TLLRVAEIGG…EGREVCLSYF (260 aa)).

The protein belongs to the class V-like SAM-binding methyltransferase superfamily. Histone-lysine methyltransferase family. SET2 subfamily.

It localises to the nucleus. The protein localises to the chromosome. It carries out the reaction L-lysyl-[histone] + S-adenosyl-L-methionine = N(6)-methyl-L-lysyl-[histone] + S-adenosyl-L-homocysteine + H(+). Histone methyltransferase. The chain is Histone-lysine N-methyltransferase ASHR2 (ASHR2) from Arabidopsis thaliana (Mouse-ear cress).